A 356-amino-acid chain; its full sequence is Tyrosine recombinase XerS (356 aa).

A Core-binding (CB) domain is found at 16-121 (TMPWYILEYY…ALSSLYKYLT (106 aa)). The Tyr recombinase domain maps to 169 to 354 (EFLQYIDTEY…VNDEQKNALD (186 aa)). Active-site residues include arginine 210, lysine 234, histidine 306, arginine 309, and histidine 332. The active-site O-(3'-phospho-DNA)-tyrosine intermediate is the tyrosine 341.

It belongs to the 'phage' integrase family. XerS subfamily.

It is found in the cytoplasm. FtsK is required for recombination. Its function is as follows. Site-specific tyrosine recombinase, which acts by catalyzing the cutting and rejoining of the recombining DNA molecules. Essential to convert dimers of the bacterial chromosome into monomers to permit their segregation at cell division. The protein is Tyrosine recombinase XerS of Streptococcus sanguinis (strain SK36).